A 179-amino-acid chain; its full sequence is Large ribosomal subunit protein uL5 (179 aa).

Belongs to the universal ribosomal protein uL5 family. Part of the 50S ribosomal subunit; part of the 5S rRNA/L5/L18/L25 subcomplex. Contacts the 5S rRNA and the P site tRNA. Forms a bridge to the 30S subunit in the 70S ribosome.

This is one of the proteins that bind and probably mediate the attachment of the 5S RNA into the large ribosomal subunit, where it forms part of the central protuberance. In the 70S ribosome it contacts protein S13 of the 30S subunit (bridge B1b), connecting the 2 subunits; this bridge is implicated in subunit movement. Contacts the P site tRNA; the 5S rRNA and some of its associated proteins might help stabilize positioning of ribosome-bound tRNAs. This is Large ribosomal subunit protein uL5 from Hamiltonella defensa subsp. Acyrthosiphon pisum (strain 5AT).